The primary structure comprises 80 residues: ATP synthase subunit c (80 aa).

A run of 2 helical transmembrane segments spans residues 8–28 and 55–75; these read MIYF…AIGI and IVMG…LYLI.

The protein belongs to the ATPase C chain family. In terms of assembly, F-type ATPases have 2 components, F(1) - the catalytic core - and F(0) - the membrane proton channel. F(1) has five subunits: alpha(3), beta(3), gamma(1), delta(1), epsilon(1). F(0) has three main subunits: a(1), b(2) and c(10-14). The alpha and beta chains form an alternating ring which encloses part of the gamma chain. F(1) is attached to F(0) by a central stalk formed by the gamma and epsilon chains, while a peripheral stalk is formed by the delta and b chains.

It is found in the cell inner membrane. F(1)F(0) ATP synthase produces ATP from ADP in the presence of a proton or sodium gradient. F-type ATPases consist of two structural domains, F(1) containing the extramembraneous catalytic core and F(0) containing the membrane proton channel, linked together by a central stalk and a peripheral stalk. During catalysis, ATP synthesis in the catalytic domain of F(1) is coupled via a rotary mechanism of the central stalk subunits to proton translocation. Its function is as follows. Key component of the F(0) channel; it plays a direct role in translocation across the membrane. A homomeric c-ring of between 10-14 subunits forms the central stalk rotor element with the F(1) delta and epsilon subunits. The protein is ATP synthase subunit c of Aeromonas salmonicida (strain A449).